Consider the following 59-residue polypeptide: Small ribosomal subunit protein bS21A (59 aa).

This sequence belongs to the bacterial ribosomal protein bS21 family.

The chain is Small ribosomal subunit protein bS21A from Gloeobacter violaceus (strain ATCC 29082 / PCC 7421).